Consider the following 67-residue polypeptide: Large ribosomal subunit protein bL35 (67 aa).

Positions 21–50 (KVMCGPGNKRHGLINRPQKMKRTNRGPQTM) are disordered. Positions 28 to 44 (NKRHGLINRPQKMKRTN) are enriched in basic residues.

This sequence belongs to the bacterial ribosomal protein bL35 family.

The sequence is that of Large ribosomal subunit protein bL35 from Gluconobacter oxydans (strain 621H) (Gluconobacter suboxydans).